The following is a 266-amino-acid chain: Undecaprenyl-diphosphatase (266 aa).

Transmembrane regions (helical) follow at residues 1 to 21 (MTWL…FLPI), 39 to 59 (QGLA…MVYF), 87 to 107 (WAVI…DSWI), 111 to 131 (LRSA…LGMA), 143 to 163 (FTLK…IPGT), 186 to 206 (FSFL…GLEL), 217 to 237 (EIAG…HLFL), and 243 to 263 (IGFM…LVWL).

This sequence belongs to the UppP family.

Its subcellular location is the cell inner membrane. It catalyses the reaction di-trans,octa-cis-undecaprenyl diphosphate + H2O = di-trans,octa-cis-undecaprenyl phosphate + phosphate + H(+). Catalyzes the dephosphorylation of undecaprenyl diphosphate (UPP). Confers resistance to bacitracin. This is Undecaprenyl-diphosphatase from Hahella chejuensis (strain KCTC 2396).